The chain runs to 251 residues: Ell1-associated factor 1 (251 aa).

Disordered stretches follow at residues Ser110–Val187 and Phe201–Asp251. Polar residues predominate over residues Thr112–Asn123. A compositionally biased stretch (low complexity) spans Ser124–Ser135. The span at Arg143–Ile157 shows a compositional bias: basic and acidic residues. Composition is skewed to polar residues over residues Glu204–Lys220 and Ser236–Asp251. Phosphoserine is present on Ser247.

It belongs to the EAF family. In terms of assembly, forms a stable heterodimer with ell1. Ell1-eaf1 complex interacts with RNA polymerase II.

The protein resides in the nucleus. Its function is as follows. Activates transcription elongation by RNA polymerase II and pyrophosphorolysis as a complex with ell1. Acts as a transcriptional transactivator of ell1 elongation activities. This chain is Ell1-associated factor 1 (eaf1), found in Schizosaccharomyces pombe (strain 972 / ATCC 24843) (Fission yeast).